The sequence spans 70 residues: uncharacterized protein (70 aa).

This is an uncharacterized protein from Haloarcula hispanica (His1V).